The following is a 358-amino-acid chain: Popeye domain-containing protein 1 (358 aa).

The Extracellular portion of the chain corresponds to 1–48 (MNSTESIPLAQSTVAGFTSELESLTPVPSNETTCENWREIHHLVFHVA). 2 N-linked (GlcNAc...) asparagine glycosylation sites follow: Asn-2 and Asn-30. The helical transmembrane segment at 49 to 69 (NVCFAVGLLIPTTLHLHMILL) threads the bilayer. Position 70 (Arg-70) is a topological domain, cytoplasmic. A helical membrane pass occupies residues 71–91 (VMLSLGCTLYVVWATLYRCAL). Position 92 (Asp-92) is a topological domain, extracellular. Residues 93–113 (VMIWNSVFLGINILHLSYLLY) traverse the membrane as a helical segment. The segment at 93–115 (VMIWNSVFLGINILHLSYLLYKK) is required for interaction with CAV3. The Cytoplasmic portion of the chain corresponds to 114–358 (KKRPVKIEKE…PDALKVHQLP (245 aa)). Residues 136–186 (RVPPDLFRRLTGQFCMIQTLKRGQVYATEDKTSVDDRLSILLKGRMKVSYR) form a required for interaction with KCNK2 region. Ser-295 and Ser-318 each carry phosphoserine. A compositionally biased stretch (low complexity) spans 313-323 (SSSTASLPMSS). A disordered region spans residues 313 to 350 (SSSTASLPMSSPQQRASAKMKPIEEGVEDDDEVFVSPD).

Belongs to the popeye family. Homodimer. Homodimerization requires the C-terminus cytoplasmic region. Interacts (via the C-terminus cytoplasmic tail) with TJP1. Interacts (via the C-terminus cytoplasmic tail) with ARHGEF25/GEFT (via the DH domain). Interacts (via the C-terminus cytoplasmic tail) with VAMP3. Interacts with KCNK2; the interaction enhances KCNK2 surface expression and is inhibited by cAMP. Interacts with CAV3. In terms of tissue distribution, expressed in epithelial cells, skeletal muscle, heart and intestinal smooth muscle (at protein level). Expressed in fetal and adult heart and skeletal muscle.

The protein resides in the lateral cell membrane. Its subcellular location is the cell junction. The protein localises to the tight junction. It is found in the membrane. It localises to the cell membrane. The protein resides in the sarcolemma. Its subcellular location is the caveola. Functionally, cell adhesion molecule involved in the establishment and/or maintenance of cell integrity. Involved in the formation and regulation of the tight junction (TJ) paracellular permeability barrier in epithelial cells. Plays a role in VAMP3-mediated vesicular transport and recycling of different receptor molecules through its interaction with VAMP3. Plays a role in the regulation of cell shape and movement by modulating the Rho-family GTPase activity through its interaction with ARHGEF25/GEFT. Induces primordial adhesive contact and aggregation of epithelial cells in a Ca(2+)-independent manner. Also involved in striated muscle regeneration and repair and in the regulation of cell spreading. Important for the maintenance of cardiac function. Plays a regulatory function in heart rate dynamics mediated, at least in part, through cAMP-binding and, probably, by increasing cell surface expression of the potassium channel KCNK2 and enhancing current density. Is a caveolae-associated protein important for the preservation of caveolae structural and functional integrity as well as for heart protection against ischemia injury. This Mus musculus (Mouse) protein is Popeye domain-containing protein 1.